Here is a 217-residue protein sequence, read N- to C-terminus: Transmembrane protein 253 (217 aa).

4 consecutive transmembrane segments (helical) span residues 33–53 (LVLA…AVSV), 62–82 (MATA…TVTL), 96–116 (MMIF…VEVM), and 138–158 (LSAE…LFLL). Residues 187 to 217 (PGLENGPTVASTGANERVGQREQTRAALLPP) are disordered.

It is found in the membrane. This is Transmembrane protein 253 (TMEM253) from Homo sapiens (Human).